The chain runs to 660 residues: ATPase WRNIP1 (660 aa).

Residues 17–44 (QVQCPVCQQMMPAAHINSHLDRCLLLHP) form a UBZ4-type zinc finger. The Zn(2+) site is built by Cys20, Cys23, His31, His35, and Cys39. Residues 48 to 191 (AEPAAGSHRA…DDPGHWDADA (144 aa)) are disordered. A phosphoserine mark is found at Ser65 and Ser75. The span at 76–89 (ESSALKQPATPTAA) shows a compositional bias: polar residues. Lys81 participates in a covalent cross-link: Glycyl lysine isopeptide (Lys-Gly) (interchain with G-Cter in ubiquitin). The residue at position 85 (Thr85) is a Phosphothreonine. Phosphoserine is present on residues Ser91 and Ser92. Residues 92–104 (SEGEGEEGDDGGE) are compositionally biased toward acidic residues. Phosphothreonine is present on Thr116. Positions 135–155 (ARKGMGKRPAAAAAAGSASPR) are enriched in low complexity. Lys141 is covalently cross-linked (Glycyl lysine isopeptide (Lys-Gly) (interchain with G-Cter in ubiquitin)). Ser153 bears the Phosphoserine mark. Over residues 159–182 (EAEAQEEEEAGVDGDGDADVDGED) the composition is skewed to acidic residues. A Glycyl lysine isopeptide (Lys-Gly) (interchain with G-Cter in ubiquitin) cross-link involves residue Lys220. 265-271 (PGCGKTT) is a binding site for ATP. Residues Lys296, Lys305, Lys311, Lys317, and Lys330 each participate in a glycyl lysine isopeptide (Lys-Gly) (interchain with G-Cter in ubiquitin) cross-link. Residue Lys477 forms a Glycyl lysine isopeptide (Lys-Gly) (interchain with G-Cter in SUMO2); alternate linkage. A Glycyl lysine isopeptide (Lys-Gly) (interchain with G-Cter in ubiquitin); alternate cross-link involves residue Lys477. 2 positions are modified to phosphotyrosine: Tyr529 and Tyr557. Lys622 participates in a covalent cross-link: Glycyl lysine isopeptide (Lys-Gly) (interchain with G-Cter in ubiquitin). Lys628 is covalently cross-linked (Glycyl lysine isopeptide (Lys-Gly) (interchain with G-Cter in ubiquitin); alternate). The residue at position 628 (Lys628) is an N6-acetyllysine; alternate. A Glycyl lysine isopeptide (Lys-Gly) (interchain with G-Cter in ubiquitin) cross-link involves residue Lys631.

Belongs to the AAA ATPase family. RarA/MGS1/WRNIP1 subfamily. As to quaternary structure, forms homooligomers, possibly octamers. Directly interacts with POLD1, POLD2 and POLD4. Interacts with the N-terminal domain of WRN. Interacts (via UBZ4-type zinc finger) with monoubiquitin and polyubiquitin. Interacts with TRIM14 and PPP6C; these interactions positively regulate the RIGI signaling pathway. In terms of processing, sumoylated with SUMO1 and SUMO2/3. Ubiquitously expressed.

Its subcellular location is the nucleus. The protein resides in the cytoplasm. It catalyses the reaction ATP + H2O = ADP + phosphate + H(+). Functionally, functions as a modulator of initiation or reinitiation events during DNA polymerase delta-mediated DNA synthesis. In the presence of ATP, stimulation of DNA polymerase delta-mediated DNA synthesis is decreased. Also plays a role in the innate immune defense against viruses. Stabilizes the RIGI dsRNA interaction and promotes RIGI 'Lys-63'-linked polyubiquitination. In turn, RIGI transmits the signal through mitochondrial MAVS. This chain is ATPase WRNIP1, found in Mus musculus (Mouse).